Reading from the N-terminus, the 304-residue chain is Murein tetrapeptide carboxypeptidase (304 aa).

Ser106 functions as the Nucleophile in the catalytic mechanism. Catalysis depends on charge relay system residues Glu200 and His270.

Belongs to the peptidase S66 family.

It is found in the cytoplasm. It carries out the reaction N-acetyl-D-glucosaminyl-N-acetylmuramoyl-L-alanyl-meso-2,6-diaminoheptanedioyl-D-alanine + H2O = N-acetyl-D-glucosaminyl-N-acetylmuramoyl-L-alanyl-meso-2,6-diaminoheptanedioate + D-alanine. It functions in the pathway cell wall biogenesis; peptidoglycan recycling. Functionally, releases the terminal D-alanine residue from the cytoplasmic tetrapeptide recycling product L-Ala-gamma-D-Glu-meso-Dap-D-Ala. Can also cleave D-Ala from murein derivatives containing the tetrapeptide, i.e. MurNAc-tetrapeptide, UDP-MurNAc-tetrapeptide, GlcNAc-MurNAc-tetrapeptide, and GlcNAc-anhMurNAc-tetrapeptide. Does not act on murein sacculi or cross-linked muropeptides. The tripeptides produced by the LcdA reaction can then be reused as peptidoglycan building blocks; LcdA is thereby involved in murein recycling. The sequence is that of Murein tetrapeptide carboxypeptidase (ldcA) from Escherichia coli O6:H1 (strain CFT073 / ATCC 700928 / UPEC).